Here is a 1088-residue protein sequence, read N- to C-terminus: RNA-directed RNA polymerase (1088 aa).

The region spanning 501 to 687 (LSYGDVTRFL…AKRYIAGGKI (187 aa)) is the RdRp catalytic domain.

Belongs to the reoviridae RNA-directed RNA polymerase family. Interacts with VP3 (Potential). Interacts with VP2; this interaction activates VP1. Interacts with NSP5; this interaction is probably necessary for the formation of functional virus factories. Interacts with NSP2; this interaction is weak. Mg(2+) serves as cofactor.

It localises to the virion. The enzyme catalyses RNA(n) + a ribonucleoside 5'-triphosphate = RNA(n+1) + diphosphate. In terms of biological role, RNA-directed RNA polymerase that is involved in both transcription and genome replication. Together with VP3 capping enzyme, forms an enzyme complex positioned near the channels situated at each of the five-fold vertices of the core. Following infection, the outermost layer of the virus is lost, leaving a double-layered particle (DLP) made up of the core and VP6 shell. VP1 then catalyzes the transcription of fully conservative plus-strand genomic RNAs that are extruded through the DLP's channels into the cytoplasm where they function as mRNAs for translation of viral proteins. One copy of each of the viral (+)RNAs is also recruited during core assembly, together with newly synthesized polymerase complexes and VP2. The polymerase of these novo-formed particles catalyzes the synthesis of complementary minus-strands leading to dsRNA formation. To do so, the polymerase specifically recognizes and binds 4 bases 5'-UGUG-3' in the conserved 3'-sequence of plus-strand RNA templates. VP2 presumably activates the autoinhibited VP1-RNA complex to coordinate packaging and genome replication. Once dsRNA synthesis is complete, the polymerase switches to the transcriptional mode, thus providing secondary transcription. The protein is RNA-directed RNA polymerase of Homo sapiens (Human).